Here is a 500-residue protein sequence, read N- to C-terminus: NAD(P)H-quinone oxidoreductase chain 4, chloroplastic (500 aa).

Helical transmembrane passes span Phe3 to Phe23, Ile37 to Leu57, Ile87 to Val107, Leu113 to Ala130, Leu134 to Met154, Phe167 to Leu187, Ala208 to Ile228, His242 to Ile262, Ala272 to Ala292, Ile305 to Asp325, Gly330 to Gly350, Met364 to Ala384, Leu386 to Thr406, Leu411 to Ile431, and Leu462 to Val482.

The protein belongs to the complex I subunit 4 family.

The protein resides in the plastid. The protein localises to the chloroplast thylakoid membrane. The catalysed reaction is a plastoquinone + NADH + (n+1) H(+)(in) = a plastoquinol + NAD(+) + n H(+)(out). It catalyses the reaction a plastoquinone + NADPH + (n+1) H(+)(in) = a plastoquinol + NADP(+) + n H(+)(out). The protein is NAD(P)H-quinone oxidoreductase chain 4, chloroplastic of Daucus carota (Wild carrot).